The sequence spans 54 residues: Apelin receptor early endogenous ligand (54 aa).

Positions 1–22 are cleaved as a signal peptide; sequence MRFQQFLFAFFIFIMSLLLISG. A glycan (N-linked (GlcNAc...) asparagine) is linked at Asn27.

This sequence belongs to the Elabela/Toddler family. In terms of assembly, interacts with APLNR. Expressed in the intima of blood vessels. Expressed in endothelial cells in blood vessels in the heart and lung. Expressed in cytotrophoblasts and syncytiotrophoblasts of first-trimester placental tissue and term placentas (at protein level). Not detected in smooth muscle cells or cardiomyocytes (at protein level). Expressed in kidney. Expressed in blood vessels. Expressed in embryonic (ESCs) and induced (iPSCs) pluripotent stem cells. Most highly expressed in undifferentiated embryonic stem cell and is rapidly down-regulated during differentiation.

Its subcellular location is the secreted. It localises to the extracellular space. Peptide hormone that functions as endogenous ligand for the G-protein-coupled apelin receptor (APLNR/APJ), that plays a role in the regulation of normal cardiovascular function and fluid homeostasis. Functions as a balanced agonist activating both G(i) protein pathway and beta-arrestin pathway of APLNR. Downstream G proteins activation, apelin can inhibit cAMP production and activate key intracellular effectors such as ERKs. On the other hand, APLNR activation induces beta-arrestin recruitment to the membrane leading to desensitization and internalization of the receptor. Required for mesendodermal differentiation, blood vessels formation and heart morphogenesis during early development and for adult cardiovascular homeostasis. Acts as a motogen by promoting mesendodermal cell migration during gastrulation by binding and activating APLNR. Acts as an early embryonic regulator of cellular movement with a role in migration and development of cardiac progenitor cells. May act as a chemoattractant for the activation of angioblast migration toward the embryonic midline, i.e. the position of the future vessel formation, during vasculogenesis. Positively regulates sinus venosus (SV)-derived endothelial cells migration into the developing heart to promote coronary blood vessel sprouting. Plays a role in placental vascular development; promotes placental trophoblast invasion and spiral artery remodeling in the uterus. Involved in the regulation of maternal cardiovascular homeostasis to prevent gestational hypertension and for potent cardioprotective functions during heart failure. Mediates myocardial contractility in an ERK1/2-dependent manner. In Homo sapiens (Human), this protein is Apelin receptor early endogenous ligand.